The following is a 393-amino-acid chain: E3 ubiquitin-protein transferase RMND5B (393 aa).

An N-acetylmethionine modification is found at methionine 1. The region spanning 116–148 is the LisH domain; the sequence is QQQILQMAIVEHLYQQGMLSVAEELCQESTLNV. Residues 155 to 212 form the CTLH domain; sequence PFLELNRILEALHEQDLGPALEWAVSHRQRLLELNSSLEFKLHRLHFIRLLAGGPEKQ. The RING-Gid-type zinc finger occupies 338–379; that stretch reads CPILRQQTSDSNPPIKLICGHVISRDALNKLINGGKLKCPYC.

Identified in the CTLH complex that contains GID4, RANBP9 and/or RANBP10, MKLN1, MAEA, RMND5A (or alternatively its paralog RMND5B), GID8, ARMC8, WDR26 and YPEL5. Within this complex, MAEA, RMND5A (or alternatively its paralog RMND5B), GID8, WDR26, and RANBP9 and/or RANBP10 form the catalytic core, while GID4, MKLN1, ARMC8 and YPEL5 have ancillary roles.

The protein localises to the cytoplasm. Its subcellular location is the cytosol. It catalyses the reaction S-ubiquitinyl-[E2 ubiquitin-conjugating enzyme]-L-cysteine + [acceptor protein]-L-lysine = [E2 ubiquitin-conjugating enzyme]-L-cysteine + N(6)-ubiquitinyl-[acceptor protein]-L-lysine.. In terms of biological role, core component of the CTLH E3 ubiquitin-protein ligase complex that selectively accepts ubiquitin from UBE2H and mediates ubiquitination and subsequent proteasomal degradation of the transcription factor HBP1. MAEA and RMND5A are both required for catalytic activity of the CTLH E3 ubiquitin-protein ligase complex. Catalytic activity of the complex is required for normal cell proliferation. The CTLH E3 ubiquitin-protein ligase complex is not required for the degradation of enzymes involved in gluconeogenesis, such as FBP1. This is E3 ubiquitin-protein transferase RMND5B (Rmnd5b) from Mus musculus (Mouse).